We begin with the raw amino-acid sequence, 362 residues long: Solute carrier family 25 member 3 (362 aa).

The transit peptide at 1 to 49 directs the protein to the mitochondrion; that stretch reads MYSSVVHLARANPFNAPHLQLVHDGLAGPRSDPAGPPGPPRRSRNLAAA. At 50 to 63 the chain is on the mitochondrial intermembrane side; sequence AVEEQYSCDYGSGR. Solcar repeat units follow at residues 63 to 147, 160 to 244, and 261 to 339; these read RFFI…FKVL, WRTS…TVEA, and EQLV…VKVY. A helical transmembrane segment spans residues 64 to 86; the sequence is FFILCGLGGIISCGTTHTALVPL. The Mitochondrial matrix segment spans residues 87–121; the sequence is DLVKCRMQVDPQKYKSIFNGFSVTLKEDGFRGLAK. Position 99 is an N6-acetyllysine (K99). An N6-methyllysine modification is found at K112. Residues 122 to 141 form a helical membrane-spanning segment; sequence GWAPTFIGYSLQGLCKFGFY. Residues 142-161 are Mitochondrial intermembrane-facing; the sequence is EVFKVLYSNMLGEENAYLWR. Residues 162–183 form a helical membrane-spanning segment; the sequence is TSLYLAASASAEFFADIALAPM. At 184–218 the chain is on the mitochondrial matrix side; that stretch reads EAAKVRIQTQPGYANTLRDAAPKMYKEEGLKAFYK. Y196 carries the post-translational modification Phosphotyrosine. K209 bears the N6-acetyllysine mark. Residues 219–238 traverse the membrane as a helical segment; it reads GVAPLWMRQIPYTMMKFACF. Over 239–261 the chain is Mitochondrial intermembrane; that stretch reads ERTVEALYKFVVPKPRSECSKPE. Residues 262 to 284 traverse the membrane as a helical segment; that stretch reads QLVVTFVAGYIAGVFCAIVSHPA. Over 285-314 the chain is Mitochondrial matrix; it reads DSVVSVLNKEKGSSASEVLKRLGFRGVWKG. The helical transmembrane segment at 315–333 threads the bilayer; sequence LFARIIMIGTLTALQWFIY. Over 334-362 the chain is Mitochondrial intermembrane; sequence DSVKVYFRLPRPPPPEMPESLKKKLGYTQ.

This sequence belongs to the mitochondrial carrier (TC 2.A.29) family. Interacts with PPIF; the interaction is impaired by CsA. As to expression, expressed in heart, diaphragm and skeletal muscle (at protein level). Not detected in liver, lung, brain, and kidney (at protein level). In terms of tissue distribution, ubiquitous (at protein level).

The protein localises to the mitochondrion inner membrane. The catalysed reaction is phosphate(in) + H(+)(in) = phosphate(out) + H(+)(out). With respect to regulation, up-regulated in the presence of cardiolipin. In terms of biological role, inorganic ion transporter that transports phosphate or copper ions across the mitochondrial inner membrane into the matrix compartment. Mediates proton-coupled symport of phosphate ions necessary for mitochondrial oxidative phosphorylation of ADP to ATP. Transports copper ions probably in the form of anionic copper(I) complexes to maintain mitochondrial matrix copper pool and to supply copper for cytochrome C oxidase complex assembly. May also play a role in regulation of the mitochondrial permeability transition pore (mPTP). In Bos taurus (Bovine), this protein is Solute carrier family 25 member 3.